Consider the following 434-residue polypeptide: MPSEILLKIFSYLDAVSLLCAGCVSRRFYHLANDNFIWIRIYSTAFSPTRSNWKVNSVEKIAVSVSFLSVQDKEAGYWKKEYITKQIASVKAALADILKPVNPYTGLPVKTKEALRMFGLGWAIILKEKSGKEYIMEHVDLSVNDTSVTVIWYGKNWPCLASLSTLDLCGVTPVFMDWYKTPTKHRLRWHSLIAKYNLSHLTVSTMIGCDRLIRIFCLHPGLLVGVWKKEEELAFVMANLHFHHLVERSTLGSATIPYELPPHSPFLDDSPEYGLHGYQLHVDLHSGGVFYLCGTFRNLFTKKGNIENGHVKLIVIHLKNNREHLPLIGKVGLSWKTDILDGCIKSCSMMDVTLLDEHGKPFWCFSSPVCMRSPATPADGPSFLGQTYSVDYVDAEGRVHVELVWIRETEEYLIVNLVLYLSIAKINRWFGTEY.

In terms of domain architecture, F-box spans Met1 to Ile41.

In terms of assembly, directly interacts with SKP1 and CUL1.

Functionally, substrate-recognition component of the SCF (SKP1-CUL1-F-box protein)-type E3 ubiquitin ligase complex. The protein is F-box only protein 15 (FBXO15) of Macaca fascicularis (Crab-eating macaque).